A 186-amino-acid polypeptide reads, in one-letter code: Elongation factor P (186 aa).

This sequence belongs to the elongation factor P family.

It is found in the cytoplasm. It functions in the pathway protein biosynthesis; polypeptide chain elongation. Functionally, involved in peptide bond synthesis. Stimulates efficient translation and peptide-bond synthesis on native or reconstituted 70S ribosomes in vitro. Probably functions indirectly by altering the affinity of the ribosome for aminoacyl-tRNA, thus increasing their reactivity as acceptors for peptidyl transferase. This chain is Elongation factor P, found in Prochlorococcus marinus (strain MIT 9301).